We begin with the raw amino-acid sequence, 833 residues long: Leucine--tRNA ligase (833 aa).

Positions 41–52 (PYPSGAGLHVGH) match the 'HIGH' region motif. The 'KMSKS' region signature appears at 610–614 (KMSKS). Lys-613 is an ATP binding site.

The protein belongs to the class-I aminoacyl-tRNA synthetase family.

It localises to the cytoplasm. The enzyme catalyses tRNA(Leu) + L-leucine + ATP = L-leucyl-tRNA(Leu) + AMP + diphosphate. This chain is Leucine--tRNA ligase, found in Streptococcus pyogenes serotype M18 (strain MGAS8232).